A 541-amino-acid polypeptide reads, in one-letter code: Protein yellow (541 aa).

The first 21 residues, 1–21 (MFQDKGWILVTLITLVTPSWA), serve as a signal peptide directing secretion. Asparagine 144 and asparagine 215 each carry an N-linked (GlcNAc...) asparagine glycan. The interval 443–463 (QKPQTSWASSPPPPSRTYLPA) is disordered.

It belongs to the major royal jelly protein family.

It localises to the secreted. Controls the pigmentation pattern of the adult cuticle and larval mouth parts. The sequence is that of Protein yellow (y) from Drosophila melanogaster (Fruit fly).